The following is a 548-amino-acid chain: Adenine deaminase (548 aa).

The protein belongs to the metallo-dependent hydrolases superfamily. Adenine deaminase family. Requires Mn(2+) as cofactor.

It catalyses the reaction adenine + H2O + H(+) = hypoxanthine + NH4(+). The polypeptide is Adenine deaminase (Borreliella burgdorferi (strain ATCC 35210 / DSM 4680 / CIP 102532 / B31) (Borrelia burgdorferi)).